A 287-amino-acid chain; its full sequence is Large ribosomal subunit protein uL2 (287 aa).

Residues 221-287 (RGSVMNPCDH…SKRSRGGRDS (67 aa)) are disordered. Positions 258-287 (KTRKRNKPSNKFVLRKRRKTSKRSRGGRDS) are enriched in basic residues.

This sequence belongs to the universal ribosomal protein uL2 family. Part of the 50S ribosomal subunit. Forms a bridge to the 30S subunit in the 70S ribosome.

Functionally, one of the primary rRNA binding proteins. Required for association of the 30S and 50S subunits to form the 70S ribosome, for tRNA binding and peptide bond formation. It has been suggested to have peptidyltransferase activity; this is somewhat controversial. Makes several contacts with the 16S rRNA in the 70S ribosome. In Synechococcus sp. (strain RCC307), this protein is Large ribosomal subunit protein uL2.